A 196-amino-acid chain; its full sequence is NADH-quinone oxidoreductase subunit I (196 aa).

4Fe-4S ferredoxin-type domains follow at residues 54 to 84 and 104 to 133; these read LNRW…VEGA and RVYQ…MTNE. Cys64, Cys67, Cys70, Cys74, Cys113, Cys116, Cys119, and Cys123 together coordinate [4Fe-4S] cluster.

The protein belongs to the complex I 23 kDa subunit family. In terms of assembly, NDH-1 is composed of 14 different subunits. Subunits NuoA, H, J, K, L, M, N constitute the membrane sector of the complex. [4Fe-4S] cluster is required as a cofactor.

The protein localises to the cell membrane. The enzyme catalyses a quinone + NADH + 5 H(+)(in) = a quinol + NAD(+) + 4 H(+)(out). NDH-1 shuttles electrons from NADH, via FMN and iron-sulfur (Fe-S) centers, to quinones in the respiratory chain. The immediate electron acceptor for the enzyme in this species is believed to be ubiquinone. Couples the redox reaction to proton translocation (for every two electrons transferred, four hydrogen ions are translocated across the cytoplasmic membrane), and thus conserves the redox energy in a proton gradient. The protein is NADH-quinone oxidoreductase subunit I of Nocardioides sp. (strain ATCC BAA-499 / JS614).